A 50-amino-acid chain; its full sequence is Basic phospholipase A2 Bmaj-9 (50 aa).

Residues tyrosine 27, glycine 29, and glycine 31 each coordinate Ca(2+). Cysteine 28 and cysteine 45 form a disulfide bridge. Histidine 48 is a catalytic residue. Aspartate 49 is a Ca(2+) binding site.

Belongs to the phospholipase A2 family. Group II subfamily. D49 sub-subfamily. Requires Ca(2+) as cofactor. In terms of tissue distribution, expressed by the venom gland.

The protein localises to the secreted. The catalysed reaction is a 1,2-diacyl-sn-glycero-3-phosphocholine + H2O = a 1-acyl-sn-glycero-3-phosphocholine + a fatty acid + H(+). In terms of biological role, snake venom phospholipase A2 (PLA2) that causes irreversible neuromuscular blockade in chick biventer cervicis muscle preparations. The neuromuscular blockade is mediated by inhibitory action at the presynaptic motor nerve endings. PLA2 catalyzes the calcium-dependent hydrolysis of the 2-acyl groups in 3-sn-phosphoglycerides. The protein is Basic phospholipase A2 Bmaj-9 of Bothrops marajoensis (Marajo lancehead).